The sequence spans 122 residues: Large ribosomal subunit protein uL14c (122 aa).

This sequence belongs to the universal ribosomal protein uL14 family. In terms of assembly, part of the 50S ribosomal subunit.

It is found in the plastid. The protein resides in the chloroplast. Functionally, binds to 23S rRNA. The sequence is that of Large ribosomal subunit protein uL14c from Adiantum capillus-veneris (Maidenhair fern).